The following is a 101-amino-acid chain: uncharacterized protein (101 aa).

This is an uncharacterized protein from Gracula (BFDV).